The sequence spans 202 residues: Adapter protein MecA 2 (202 aa).

The protein belongs to the MecA family. Homodimer.

Its function is as follows. Enables the recognition and targeting of unfolded and aggregated proteins to the ClpC protease or to other proteins involved in proteolysis. Acts negatively in the development of competence by binding ComK and recruiting it to the ClpCP protease. When overexpressed, inhibits sporulation. Also involved in Spx degradation by ClpC. This Bacillus cereus (strain ATCC 14579 / DSM 31 / CCUG 7414 / JCM 2152 / NBRC 15305 / NCIMB 9373 / NCTC 2599 / NRRL B-3711) protein is Adapter protein MecA 2 (mecA2).